The chain runs to 240 residues: Leucyl/phenylalanyl-tRNA--protein transferase (240 aa).

The protein belongs to the L/F-transferase family.

It localises to the cytoplasm. The catalysed reaction is N-terminal L-lysyl-[protein] + L-leucyl-tRNA(Leu) = N-terminal L-leucyl-L-lysyl-[protein] + tRNA(Leu) + H(+). It carries out the reaction N-terminal L-arginyl-[protein] + L-leucyl-tRNA(Leu) = N-terminal L-leucyl-L-arginyl-[protein] + tRNA(Leu) + H(+). It catalyses the reaction L-phenylalanyl-tRNA(Phe) + an N-terminal L-alpha-aminoacyl-[protein] = an N-terminal L-phenylalanyl-L-alpha-aminoacyl-[protein] + tRNA(Phe). Functions in the N-end rule pathway of protein degradation where it conjugates Leu, Phe and, less efficiently, Met from aminoacyl-tRNAs to the N-termini of proteins containing an N-terminal arginine or lysine. This chain is Leucyl/phenylalanyl-tRNA--protein transferase, found in Maridesulfovibrio salexigens (strain ATCC 14822 / DSM 2638 / NCIMB 8403 / VKM B-1763) (Desulfovibrio salexigens).